Consider the following 46-residue polypeptide: Protein PsbN (46 aa).

The chain crosses the membrane as a helical span at residues 7–27; sequence ALSVAIGVLAVLLGMTGFGVY.

This sequence belongs to the PsbN family.

It localises to the cellular thylakoid membrane. May play a role in photosystem I and II biogenesis. In Parasynechococcus marenigrum (strain WH8102), this protein is Protein PsbN.